Reading from the N-terminus, the 891-residue chain is Protein translocase subunit SecA (891 aa).

Residues Q83, G101–T105, and D489 contribute to the ATP site.

The protein belongs to the SecA family.

It is found in the plastid. The protein localises to the chloroplast stroma. The protein resides in the chloroplast thylakoid membrane. The enzyme catalyses ATP + H2O + cellular proteinSide 1 = ADP + phosphate + cellular proteinSide 2.. Its function is as follows. Has a central role in coupling the hydrolysis of ATP to the transfer of proteins across the thylakoid membrane. This chain is Protein translocase subunit SecA, found in Diacronema lutheri (Unicellular marine alga).